The primary structure comprises 291 residues: Phosphatidylserine decarboxylase proenzyme 2 (291 aa).

Catalysis depends on charge relay system; for autoendoproteolytic cleavage activity residues D112 and S251. S251 serves as the catalytic Schiff-base intermediate with substrate; via pyruvic acid; for decarboxylase activity. The residue at position 251 (S251) is a Pyruvic acid (Ser); by autocatalysis.

This sequence belongs to the phosphatidylserine decarboxylase family. PSD-B subfamily. Prokaryotic type II sub-subfamily. As to quaternary structure, heterodimer of a large membrane-associated beta subunit and a small pyruvoyl-containing alpha subunit. Pyruvate is required as a cofactor. Post-translationally, is synthesized initially as an inactive proenzyme. Formation of the active enzyme involves a self-maturation process in which the active site pyruvoyl group is generated from an internal serine residue via an autocatalytic post-translational modification. Two non-identical subunits are generated from the proenzyme in this reaction, and the pyruvate is formed at the N-terminus of the alpha chain, which is derived from the carboxyl end of the proenzyme. The autoendoproteolytic cleavage occurs by a canonical serine protease mechanism, in which the side chain hydroxyl group of the serine supplies its oxygen atom to form the C-terminus of the beta chain, while the remainder of the serine residue undergoes an oxidative deamination to produce ammonia and the pyruvoyl prosthetic group on the alpha chain. During this reaction, the Ser that is part of the protease active site of the proenzyme becomes the pyruvoyl prosthetic group, which constitutes an essential element of the active site of the mature decarboxylase.

The protein localises to the cell membrane. The catalysed reaction is a 1,2-diacyl-sn-glycero-3-phospho-L-serine + H(+) = a 1,2-diacyl-sn-glycero-3-phosphoethanolamine + CO2. It functions in the pathway phospholipid metabolism; phosphatidylethanolamine biosynthesis; phosphatidylethanolamine from CDP-diacylglycerol: step 2/2. Its function is as follows. Catalyzes the formation of phosphatidylethanolamine (PtdEtn) from phosphatidylserine (PtdSer). The sequence is that of Phosphatidylserine decarboxylase proenzyme 2 from Clostridium acetobutylicum (strain ATCC 824 / DSM 792 / JCM 1419 / IAM 19013 / LMG 5710 / NBRC 13948 / NRRL B-527 / VKM B-1787 / 2291 / W).